A 203-amino-acid polypeptide reads, in one-letter code: uncharacterized protein (203 aa).

Disordered regions lie at residues 65–84 and 92–170; these read LSLS…SFDS and SSSS…ETAL. 2 stretches are compositionally biased toward acidic residues: residues 68 to 82 and 98 to 110; these read SEDE…EDSF and SEEE…EESL. Residues 111–122 show a composition bias toward low complexity; that stretch reads DSSFLVSASLSL. A compositionally biased stretch (acidic residues) spans 123 to 168; that stretch reads SEDDEEEDSESEDEDEDEDSDSDSDSDSDSDEDEDEDEDSEEEEET. The helical transmembrane segment at 182–202 threads the bilayer; that stretch reads TSFLLPFTLVVLAILFYPAWV.

The protein localises to the membrane. This is an uncharacterized protein from Saccharomyces cerevisiae (strain ATCC 204508 / S288c) (Baker's yeast).